A 736-amino-acid chain; its full sequence is Phosphoribosylformylglycinamidine synthase subunit PurL (736 aa).

H49 is an active-site residue. ATP is bound by residues Y52 and K91. Residue E93 coordinates Mg(2+). Residues 94–97 (SHNH) and R116 each bind substrate. Residue H95 is the Proton acceptor of the active site. D117 contributes to the Mg(2+) binding site. Position 240 (Q240) interacts with substrate. D268 contributes to the Mg(2+) binding site. 312–314 (ESQ) is a binding site for substrate. ATP is bound by residues D493 and G530. N531 contributes to the Mg(2+) binding site. Substrate is bound at residue S533.

It belongs to the FGAMS family. Monomer. Part of the FGAM synthase complex composed of 1 PurL, 1 PurQ and 2 PurS subunits.

The protein localises to the cytoplasm. The catalysed reaction is N(2)-formyl-N(1)-(5-phospho-beta-D-ribosyl)glycinamide + L-glutamine + ATP + H2O = 2-formamido-N(1)-(5-O-phospho-beta-D-ribosyl)acetamidine + L-glutamate + ADP + phosphate + H(+). The protein operates within purine metabolism; IMP biosynthesis via de novo pathway; 5-amino-1-(5-phospho-D-ribosyl)imidazole from N(2)-formyl-N(1)-(5-phospho-D-ribosyl)glycinamide: step 1/2. Part of the phosphoribosylformylglycinamidine synthase complex involved in the purines biosynthetic pathway. Catalyzes the ATP-dependent conversion of formylglycinamide ribonucleotide (FGAR) and glutamine to yield formylglycinamidine ribonucleotide (FGAM) and glutamate. The FGAM synthase complex is composed of three subunits. PurQ produces an ammonia molecule by converting glutamine to glutamate. PurL transfers the ammonia molecule to FGAR to form FGAM in an ATP-dependent manner. PurS interacts with PurQ and PurL and is thought to assist in the transfer of the ammonia molecule from PurQ to PurL. This chain is Phosphoribosylformylglycinamidine synthase subunit PurL, found in Rhodopseudomonas palustris (strain BisB18).